Reading from the N-terminus, the 107-residue chain is Flagellar hook-basal body complex protein FliE (107 aa).

The protein belongs to the FliE family.

The protein localises to the bacterial flagellum basal body. This chain is Flagellar hook-basal body complex protein FliE, found in Cupriavidus pinatubonensis (strain JMP 134 / LMG 1197) (Cupriavidus necator (strain JMP 134)).